A 6668-amino-acid chain; its full sequence is Centrosome-associated protein CEP250 (6668 aa).

Coiled-coil stretches lie at residues 562 to 589 (KAFH…LQQD), 632 to 666 (TREL…LRAS), 873 to 988 (HTEC…LRSS), 1042 to 1087 (LRMS…HEAA), 1252 to 1307 (VEDL…AVSR), 1333 to 1427 (LESL…LEKK), 1501 to 1538 (RPAA…LGTQ), 1594 to 1688 (REAL…SEVA), 1896 to 1930 (HDIL…TTEK), 1975 to 2224 (EETL…AKQS), 2298 to 3272 (AEDE…LKME), 3298 to 3436 (QQEL…SRAE), 3526 to 3599 (LVQL…AKEE), 3697 to 3773 (CASL…EERR), 3856 to 4137 (TEML…VEAE), 4170 to 4486 (RRKL…LRER), 4515 to 5078 (LETL…FRRR), 5165 to 5202 (LASL…QETL), 5298 to 5731 (LREK…QHRV), and 5927 to 6119 (TQAL…LWRQ).

Proteolytically cleaved; only the full-length form localizes to the inner core, while processed version also localizes to the outer core during the onset of cell division.

The protein resides in the cytoplasm. The protein localises to the cytoskeleton. It localises to the microtubule organizing center. It is found in the centrosome. In terms of biological role, part of the centrosome inner core complex. Required for the linking of centrosomal inner and outer cores. This is Centrosome-associated protein CEP250 from Toxoplasma gondii (strain ATCC 50611 / Me49).